The sequence spans 472 residues: Glutamate--tRNA ligase (472 aa).

The short motif at 9 to 19 (PSPTGYLHVGG) is the 'HIGH' region element. Zn(2+) is bound by residues cysteine 98, cysteine 100, cysteine 125, and histidine 127. Positions 237–241 (KLSKR) match the 'KMSKS' region motif. Residue lysine 240 coordinates ATP.

The protein belongs to the class-I aminoacyl-tRNA synthetase family. Glutamate--tRNA ligase type 1 subfamily. Monomer. Requires Zn(2+) as cofactor.

It is found in the cytoplasm. It catalyses the reaction tRNA(Glu) + L-glutamate + ATP = L-glutamyl-tRNA(Glu) + AMP + diphosphate. Functionally, catalyzes the attachment of glutamate to tRNA(Glu) in a two-step reaction: glutamate is first activated by ATP to form Glu-AMP and then transferred to the acceptor end of tRNA(Glu). The sequence is that of Glutamate--tRNA ligase from Klebsiella pneumoniae (strain 342).